Reading from the N-terminus, the 369-residue chain is Mannose-1-phosphate guanylyltransferase catalytic subunit beta (369 aa).

Residues 12–231 (RALILVGGYG…TGFWMDIGQP (220 aa)) form a substrate-binding domain region. Asp-120 serves as a coordination point for GDP-alpha-D-mannose. Mg(2+) is bound at residue Asp-120. Lys-171 is an active-site residue. Asp-227 is a GDP-alpha-D-mannose binding site. Asp-227 serves as a coordination point for Mg(2+). A hexapeptide repeat domain region spans residues 254 to 369 (YTGPGVVGNV…ASVPEPQIIM (116 aa)).

The protein belongs to the transferase hexapeptide repeat family. In terms of assembly, component of the GMPPA-GMPPB mannose-1-phosphate guanylyltransferase complex composed of 4 Gmppa subunits and 8 Gmppb subunits; the complex is organized into three layers, a central layer made up of 2 Gmppa dimers sandwiched between two layers each made up of 2 Gmppb dimers. Gmppb catalytic activity is reduced when part of the complex and binding of GDP-alpha-D-Mannose by Gmppa induces allosteric feedback inhibition of Gmppb. Mg(2+) is required as a cofactor.

The catalysed reaction is alpha-D-mannose 1-phosphate + GTP + H(+) = GDP-alpha-D-mannose + diphosphate. Its pathway is nucleotide-sugar biosynthesis; GDP-alpha-D-mannose biosynthesis; GDP-alpha-D-mannose from alpha-D-mannose 1-phosphate (GTP route): step 1/1. Enzyme activity is reduced by incorporation into the GMPPA-GMPPB mannose-1-phosphate guanylyltransferase complex. Allosterically inhibited, when part of the GMPPA-GMPPB complex, by GDP-alpha-D-mannose binding to Gmppa. Functionally, catalytic subunit of the GMPPA-GMPPB mannose-1-phosphate guanylyltransferase complex. Catalyzes the formation of GDP-mannose, an essential precursor of glycan moieties of glycoproteins and glycolipids. Can catalyze the reverse reaction in vitro. Together with GMPPA regulates GDP-alpha-D-mannose levels. This Drosophila melanogaster (Fruit fly) protein is Mannose-1-phosphate guanylyltransferase catalytic subunit beta.